A 105-amino-acid polypeptide reads, in one-letter code: Integration host factor subunit alpha (105 aa).

This sequence belongs to the bacterial histone-like protein family. As to quaternary structure, heterodimer of an alpha and a beta chain.

This protein is one of the two subunits of integration host factor, a specific DNA-binding protein that functions in genetic recombination as well as in transcriptional and translational control. In Xanthobacter autotrophicus (strain ATCC BAA-1158 / Py2), this protein is Integration host factor subunit alpha.